A 391-amino-acid polypeptide reads, in one-letter code: Candidapepsin-1 (391 aa).

An N-terminal signal peptide occupies residues 1 to 18 (MFLKNIFIALAIALLVDA). A propeptide spans 19 to 50 (SPAKRSPGFVTLDFDVIKTPVNATGQEGKVKR) (activation peptide). Asn-40 carries N-linked (GlcNAc...) asparagine glycosylation. The Peptidase A1 domain occupies 64–377 (YAADITIGSN…DLDDDKISLA (314 aa)). Asp-82 is a catalytic residue. Cys-97 and Cys-109 form a disulfide bridge. Asp-267 is a catalytic residue. Cys-305 and Cys-343 are disulfide-bonded.

It belongs to the peptidase A1 family. O-glycosylated.

The protein localises to the secreted. It catalyses the reaction Preferential cleavage at the carboxyl of hydrophobic amino acids, but fails to cleave 15-Leu-|-Tyr-16, 16-Tyr-|-Leu-17 and 24-Phe-|-Phe-25 of insulin B chain. Activates trypsinogen, and degrades keratin.. The polypeptide is Candidapepsin-1 (SAP1) (Candida albicans (strain WO-1) (Yeast)).